Here is a 579-residue protein sequence, read N- to C-terminus: Acetolactate synthase (579 aa).

Glu-61 is a thiamine diphosphate binding site. FAD-binding positions include Arg-163, 274–295, and 317–336; these read HGTA…VGVR and DIDP…IVGD. The interval 408-487 is thiamine pyrophosphate binding; sequence QHQMWAGQFV…VKVIILNNGW (80 aa). 2 residues coordinate Mg(2+): Asp-458 and Asn-485.

The protein belongs to the TPP enzyme family. It depends on Mg(2+) as a cofactor. Thiamine diphosphate is required as a cofactor.

The enzyme catalyses 2 pyruvate + H(+) = (2S)-2-acetolactate + CO2. Its pathway is amino-acid biosynthesis; L-isoleucine biosynthesis; L-isoleucine from 2-oxobutanoate: step 1/4. It participates in amino-acid biosynthesis; L-valine biosynthesis; L-valine from pyruvate: step 1/4. The sequence is that of Acetolactate synthase (ilvY) from Arthrospira platensis (Spirulina platensis).